Here is a 161-residue protein sequence, read N- to C-terminus: Globin CTT-VIIB-6 (161 aa).

Residues 1 to 16 (MKFFAVLALCIVGAIA) form the signal peptide. A Globin domain is found at 18 to 161 (PLTADEASLV…NTFAIVVPRL (144 aa)). Residues H76 and H111 each contribute to the heme b site.

This sequence belongs to the globin family. Homodimer.

This chain is Globin CTT-VIIB-6 (CTT-7B6), found in Chironomus thummi thummi (Midge).